A 340-amino-acid chain; its full sequence is Ketol-acid reductoisomerase (NADP(+)) (340 aa).

Positions 3–183 constitute a KARI N-terminal Rossmann domain; the sequence is LSVYYDKDCN…GGGRTGIIET (181 aa). NADP(+) contacts are provided by residues 26–29, Ser-54, and 84–87; these read FGSQ and DELQ. The active site involves His-109. NADP(+) is bound at residue Gly-135. In terms of domain architecture, KARI C-terminal knotted spans 184 to 329; the sequence is TFKDETETDL…ERLRAMMPWI (146 aa). Mg(2+) contacts are provided by Asp-192, Glu-196, Glu-228, and Glu-232. Ser-253 serves as a coordination point for substrate.

Belongs to the ketol-acid reductoisomerase family. Mg(2+) serves as cofactor.

It carries out the reaction (2R)-2,3-dihydroxy-3-methylbutanoate + NADP(+) = (2S)-2-acetolactate + NADPH + H(+). It catalyses the reaction (2R,3R)-2,3-dihydroxy-3-methylpentanoate + NADP(+) = (S)-2-ethyl-2-hydroxy-3-oxobutanoate + NADPH + H(+). It functions in the pathway amino-acid biosynthesis; L-isoleucine biosynthesis; L-isoleucine from 2-oxobutanoate: step 2/4. Its pathway is amino-acid biosynthesis; L-valine biosynthesis; L-valine from pyruvate: step 2/4. In terms of biological role, involved in the biosynthesis of branched-chain amino acids (BCAA). Catalyzes an alkyl-migration followed by a ketol-acid reduction of (S)-2-acetolactate (S2AL) to yield (R)-2,3-dihydroxy-isovalerate. In the isomerase reaction, S2AL is rearranged via a Mg-dependent methyl migration to produce 3-hydroxy-3-methyl-2-ketobutyrate (HMKB). In the reductase reaction, this 2-ketoacid undergoes a metal-dependent reduction by NADPH to yield (R)-2,3-dihydroxy-isovalerate. This chain is Ketol-acid reductoisomerase (NADP(+)), found in Wolinella succinogenes (strain ATCC 29543 / DSM 1740 / CCUG 13145 / JCM 31913 / LMG 7466 / NCTC 11488 / FDC 602W) (Vibrio succinogenes).